The primary structure comprises 316 residues: Methionyl-tRNA formyltransferase (316 aa).

Position 117-120 (117-120 (SLLP)) interacts with (6S)-5,6,7,8-tetrahydrofolate.

This sequence belongs to the Fmt family.

It catalyses the reaction L-methionyl-tRNA(fMet) + (6R)-10-formyltetrahydrofolate = N-formyl-L-methionyl-tRNA(fMet) + (6S)-5,6,7,8-tetrahydrofolate + H(+). In terms of biological role, attaches a formyl group to the free amino group of methionyl-tRNA(fMet). The formyl group appears to play a dual role in the initiator identity of N-formylmethionyl-tRNA by promoting its recognition by IF2 and preventing the misappropriation of this tRNA by the elongation apparatus. The sequence is that of Methionyl-tRNA formyltransferase from Janthinobacterium sp. (strain Marseille) (Minibacterium massiliensis).